The primary structure comprises 531 residues: Peptide chain release factor 3 (531 aa).

A tr-type G domain is found at arginine 10 to lysine 278. Residues serine 19 to threonine 26, aspartate 87 to histidine 91, and asparagine 141 to aspartate 144 each bind GTP.

It belongs to the TRAFAC class translation factor GTPase superfamily. Classic translation factor GTPase family. PrfC subfamily.

It is found in the cytoplasm. Functionally, increases the formation of ribosomal termination complexes and stimulates activities of RF-1 and RF-2. It binds guanine nucleotides and has strong preference for UGA stop codons. It may interact directly with the ribosome. The stimulation of RF-1 and RF-2 is significantly reduced by GTP and GDP, but not by GMP. The polypeptide is Peptide chain release factor 3 (Neisseria gonorrhoeae (strain ATCC 700825 / FA 1090)).